Here is a 212-residue protein sequence, read N- to C-terminus: Small ribosomal subunit protein eS1 (212 aa).

It belongs to the eukaryotic ribosomal protein eS1 family.

The protein is Small ribosomal subunit protein eS1 of Staphylothermus marinus (strain ATCC 43588 / DSM 3639 / JCM 9404 / F1).